Consider the following 589-residue polypeptide: Probable translation initiation factor IF-2 (589 aa).

Positions 3 to 224 constitute a tr-type G domain; that stretch reads VRSPFVVVMG…AGVSQRFIPR (222 aa). The G1 stretch occupies residues 12-19; the sequence is GHVDVGKT. Residue 12–19 participates in GTP binding; that stretch reads GHVDVGKT. A G2 region spans residues 37–41; it reads MITQH. The G3 stretch occupies residues 78-81; it reads DTPG. Residues 78–82 and 132–135 each bind GTP; these read DTPGH and NKLD. Residues 132–135 form a G4 region; the sequence is NKLD. The tract at residues 200–202 is G5; sequence SAV.

It belongs to the TRAFAC class translation factor GTPase superfamily. Classic translation factor GTPase family. IF-2 subfamily.

In terms of biological role, function in general translation initiation by promoting the binding of the formylmethionine-tRNA to ribosomes. Seems to function along with eIF-2. The sequence is that of Probable translation initiation factor IF-2 from Pyrobaculum neutrophilum (strain DSM 2338 / JCM 9278 / NBRC 100436 / V24Sta) (Thermoproteus neutrophilus).